A 248-amino-acid chain; its full sequence is Superoxide dismutase [Mn] 1 (248 aa).

The N-terminal stretch at M1–A41 is a signal peptide. 4 residues coordinate Mn(2+): H68, H123, D208, and H212.

This sequence belongs to the iron/manganese superoxide dismutase family. In terms of assembly, homodimer. It depends on Mn(2+) as a cofactor.

The enzyme catalyses 2 superoxide + 2 H(+) = H2O2 + O2. Its function is as follows. Destroys superoxide anion radicals which are normally produced within the cells and which are toxic to biological systems. The polypeptide is Superoxide dismutase [Mn] 1 (sodA1) (Leptolyngbya boryana (Plectonema boryanum)).